Here is a 506-residue protein sequence, read N- to C-terminus: Glycerol kinase (506 aa).

An ADP-binding site is contributed by Thr11. Residues Thr11, Ser12, and Ser13 each coordinate ATP. Residue Thr11 coordinates sn-glycerol 3-phosphate. Position 15 (Arg15) interacts with ADP. Positions 81, 82, 133, and 242 each coordinate sn-glycerol 3-phosphate. Glycerol is bound by residues Arg81, Glu82, Tyr133, Asp242, and Gln243. Residues Thr264 and Gly316 each contribute to the ADP site. Residues Thr264, Gly316, Gln320, and Gly421 each coordinate ATP. ADP-binding residues include Gly421 and Asn425.

Belongs to the FGGY kinase family.

The enzyme catalyses glycerol + ATP = sn-glycerol 3-phosphate + ADP + H(+). Its pathway is polyol metabolism; glycerol degradation via glycerol kinase pathway; sn-glycerol 3-phosphate from glycerol: step 1/1. Inhibited by fructose 1,6-bisphosphate (FBP). Key enzyme in the regulation of glycerol uptake and metabolism. Catalyzes the phosphorylation of glycerol to yield sn-glycerol 3-phosphate. This Paracidovorax citrulli (strain AAC00-1) (Acidovorax citrulli) protein is Glycerol kinase.